The following is a 591-amino-acid chain: Putative BTB/POZ domain-containing protein At5g13600 (591 aa).

One can recognise a BTB domain in the interval 28 to 95; sequence PDVMIQVVDE…CYGVRIEVTP (68 aa). The NPH3 domain maps to 208–493; it reads NWWFNDVSSF…VQVLFFEQMR (286 aa). Tyr434 bears the Phosphotyrosine mark.

It belongs to the NPH3 family.

The protein operates within protein modification; protein ubiquitination. Its function is as follows. May act as a substrate-specific adapter of an E3 ubiquitin-protein ligase complex (CUL3-RBX1-BTB) which mediates the ubiquitination and subsequent proteasomal degradation of target proteins. The chain is Putative BTB/POZ domain-containing protein At5g13600 from Arabidopsis thaliana (Mouse-ear cress).